We begin with the raw amino-acid sequence, 127 residues long: Glycine cleavage system H protein (127 aa).

The Lipoyl-binding domain occupies 24–105 (TALVGITDFA…YNDGWLVKMK (82 aa)). The residue at position 65 (K65) is an N6-lipoyllysine.

Belongs to the GcvH family. As to quaternary structure, the glycine cleavage system is composed of four proteins: P, T, L and H. It depends on (R)-lipoate as a cofactor.

In terms of biological role, the glycine cleavage system catalyzes the degradation of glycine. The H protein shuttles the methylamine group of glycine from the P protein to the T protein. This chain is Glycine cleavage system H protein, found in Pelodictyon phaeoclathratiforme (strain DSM 5477 / BU-1).